The following is a 293-amino-acid chain: G1/S-specific cyclin-D3 (293 aa).

One can recognise a Cyclin N-terminal domain in the interval V27 to L152. The segment at R257–L293 is disordered. 2 positions are modified to phosphoserine: S265 and S280. The span at P271–T286 shows a compositional bias: low complexity. T284 carries the post-translational modification Phosphothreonine.

It belongs to the cyclin family. Cyclin D subfamily. As to quaternary structure, interacts with the CDK4 and CDK6 protein kinases to form a serine/threonine kinase holoenzyme complex. The cyclin subunit imparts substrate specificity to the complex. Interacts with ATF5. Interacts with EIF3K. Component of the ternary complex cyclin D/CDK4/CDKN1B required for nuclear translocation and modulation of CDK4-mediated kinase activity. Can form similar complexes with either CDKN1A or CDKN2A. Post-translationally, phosphorylation at Thr-284 by MAP kinases is required for ubiquitination and degradation by the DCX(AMBRA1) complex. In terms of processing, ubiquitinated by the DCX(AMBRA1) complex during the transition from G1 to S cell phase, leading to its degradation: ubiquitination is dependent on Thr-284 phosphorylation. The DCX(AMBRA1) complex represents the major regulator of CCND3 stability during the G1/S transition. Polyubiquitinated by the SCF(FBXL2) complex, leading to proteasomal degradation.

Its subcellular location is the nucleus. It localises to the cytoplasm. Regulatory component of the cyclin D3-CDK4 (DC) complex that phosphorylates and inhibits members of the retinoblastoma (RB) protein family including RB1 and regulates the cell-cycle during G(1)/S transition. Phosphorylation of RB1 allows dissociation of the transcription factor E2F from the RB/E2F complex and the subsequent transcription of E2F target genes which are responsible for the progression through the G(1) phase. Hypophosphorylates RB1 in early G(1) phase. Cyclin D-CDK4 complexes are major integrators of various mitogenenic and antimitogenic signals. Component of the ternary complex, cyclin D3/CDK4/CDKN1B, required for nuclear translocation and activity of the cyclin D-CDK4 complex. Shows transcriptional coactivator activity with ATF5 independently of CDK4. This is G1/S-specific cyclin-D3 from Rattus norvegicus (Rat).